A 250-amino-acid chain; its full sequence is Deoxynucleoside-5'-monophosphate kinase (250 aa).

Residues Gly-14, Asp-16, and Thr-17 each coordinate ATP. Residues Val-44, Lys-65, Arg-130, Gly-137, Thr-138, Trp-150, Asp-170, Arg-172, Glu-176, and Ser-210 each coordinate dGMP.

The protein belongs to the dNMP kinase family. As to quaternary structure, monomer.

The enzyme catalyses a 2'-deoxyribonucleoside 5'-phosphate + ATP = a 2'-deoxyribonucleoside 5'-diphosphate + ADP. Its function is as follows. Allows the synthesis of deoxyribonucleoside triphosphates necessary for the rapid viral DNA replication. Phosphorylates all four dNMPs. The enzyme had the highest activity with dAMP and had about 30% less activity with dTMP and dGMP, respectively. The lowest activity was observed with dCMP as the substrate (about 35% of that with dAMP). This chain is Deoxynucleoside-5'-monophosphate kinase, found in Escherichia coli (Enterobacteria phage T5).